Reading from the N-terminus, the 161-residue chain is Small ribosomal subunit protein uS9 (161 aa).

Belongs to the universal ribosomal protein uS9 family.

This is Small ribosomal subunit protein uS9 (rpsI) from Rickettsia prowazekii (strain Madrid E).